The chain runs to 135 residues: MAEKEEGKVAAEGGAEAEADEEVEVKFRLFDGSDIGPLRCNAVATTVAALKDRVVADWPKDKTIVPKTANDVKLISGGKILENDKNIAQCRAPFGDLPSTAITMHVVVQPSSAKSKPDKKTNKLPKTTRCSCTIL.

The tract at residues 1–20 (MAEKEEGKVAAEGGAEAEAD) is disordered. The Ubiquitin-like domain occupies 23-92 (VEVKFRLFDG…NDKNIAQCRA (70 aa)). Cysteine 132 is subject to Cysteine methyl ester. Residue cysteine 132 is the site of S-geranylgeranyl cysteine attachment. A propeptide spans 133-135 (TIL) (removed in mature form).

It is found in the cell membrane. May serve as docking site to facilitate the association of other proteins to the plasma membrane. The sequence is that of Membrane-anchored ubiquitin-fold protein 4 (MUB4) from Oryza sativa subsp. japonica (Rice).